Consider the following 1116-residue polypeptide: MAP kinase kinase kinase mkh1 (1116 aa).

2 disordered regions span residues 510 to 601 (LKMP…SNSL) and 618 to 647 (ALDE…ENHH). Positions 515-531 (NSGSSAPQSPSSNTSAS) are enriched in low complexity. Residues 553–569 (LRRKNTLTRRPSIRHAR) are compositionally biased toward basic residues. Residues 588-601 (SFDPKASSKSSNSL) are compositionally biased toward low complexity. Positions 634-647 (PKQSSSQVPKENHH) are enriched in polar residues. Residues 825 to 1094 (WMKGELIGNG…AEELLNHPFM (270 aa)) form the Protein kinase domain. ATP contacts are provided by residues 831-839 (IGNGTYGKV) and Lys854. Asp955 (proton acceptor) is an active-site residue.

Belongs to the protein kinase superfamily. STE Ser/Thr protein kinase family. MAP kinase kinase kinase subfamily.

It catalyses the reaction L-seryl-[protein] + ATP = O-phospho-L-seryl-[protein] + ADP + H(+). It carries out the reaction L-threonyl-[protein] + ATP = O-phospho-L-threonyl-[protein] + ADP + H(+). Functionally, may regulate cell morphology, cell wall integrity, salt resistance, cell cycle reentry from stationary-phase arrest, and filamentous growth in response to stress. Activates the MAP kinase kinase skh1/pek1 by phosphorylation. This is MAP kinase kinase kinase mkh1 (mkh1) from Schizosaccharomyces pombe (strain 972 / ATCC 24843) (Fission yeast).